A 79-amino-acid chain; its full sequence is Translational regulator CsrA (79 aa).

It belongs to the CsrA/RsmA family. In terms of assembly, homodimer; the beta-strands of each monomer intercalate to form a hydrophobic core, while the alpha-helices form wings that extend away from the core.

It is found in the cytoplasm. A translational regulator that binds mRNA to regulate translation initiation and/or mRNA stability. Usually binds in the 5'-UTR at or near the Shine-Dalgarno sequence preventing ribosome-binding, thus repressing translation. Its main target seems to be the major flagellin gene, while its function is anatagonized by FliW. The protein is Translational regulator CsrA of Shouchella clausii (strain KSM-K16) (Alkalihalobacillus clausii).